The primary structure comprises 352 residues: Methylthioribose-1-phosphate isomerase (352 aa).

Substrate-binding positions include 49-51, R93, and Q202; that span reads RGA. D243 (proton donor) is an active-site residue. 253-254 serves as a coordination point for substrate; that stretch reads NK.

The protein belongs to the eIF-2B alpha/beta/delta subunits family. MtnA subfamily.

It catalyses the reaction 5-(methylsulfanyl)-alpha-D-ribose 1-phosphate = 5-(methylsulfanyl)-D-ribulose 1-phosphate. It participates in amino-acid biosynthesis; L-methionine biosynthesis via salvage pathway; L-methionine from S-methyl-5-thio-alpha-D-ribose 1-phosphate: step 1/6. Catalyzes the interconversion of methylthioribose-1-phosphate (MTR-1-P) into methylthioribulose-1-phosphate (MTRu-1-P). This chain is Methylthioribose-1-phosphate isomerase, found in Magnetococcus marinus (strain ATCC BAA-1437 / JCM 17883 / MC-1).